A 1456-amino-acid chain; its full sequence is MASQDRGSDRTSRRLTKKRKDGKKPMRDVSLDMPERFKDGDDAHEDVTAPKGNHTMSMNQSIFSMIARAGQQSNTDLGTMQEVDSGDSDDEGTRNVPYHILDGAARLSRLSTANDFQKTSGQTRDGKTEKGKHRRALSENKLLRSLPKLKIASRKDARSDGQGADQMSSSQFLPPRPSPEGSMPAPASSPPPPAAKGRVRPGDGIQMEKGRNVARKTRQRSPAAAATGEAPVSLAKRIQHIFEFAQEEEVISEYPCWLLQSILLQGYMYITQKHICFYAYIPKKHHDVSKTGYLSKRGRSKHNRYWFILRGDVLAYYTNPAELYFPRNRINLQYAISAEVLEPKRKGDEETSFVVTTDERTYQFKADSVASAREWVKSIQKVIFRTHNEGNSVKISLPIQNVLEIEESSILDFAETAKVRVIDNDETFAIDEYFFSFFTKGQDALNVLRIMINDNEHHQAAQKPVEPPSRALGQSDSGFMASTNAPSEVPHITENVRATLSPLTAPHVGRSSMSDISVRSSVDANRKNRDVRRSMDAGRTLRRWSLEGRRLSHEAHRSPSPSGHDKTHKGRVGDRSPKSPRATDSDSATFSLDPGTESSAAIQSMDDSTASASQILDRSDLFRAPVVSSPNAFSNGVNMSAHSQDTTRSSAPRPAYSKGTHPTTSPSIDPLSPGAPDGEYDTDAGGATRLSGSSSALQDIASYPLQKASGLAGFLRTRSKKMGNLLAAESMGYYEKVSGMLAGGRKHYNTAEGLETDDQVNVYEDDEDAAKATDNFREHFAFREDEVLQSSFFASLQRVLPNYGKIYISGRYFCFRSLMPTSKTKIILPMKDIENVNKEKGFRLGYYGLAIVIRGHEELFFEFGKAEYRDECAITVLRILENTKYLEDDQSSSSGVDSNDEAAKAEHDLLQQAREDNNVDKTKNLSEIVRAAADDRIPLIFDDPLASFVDFKPPEPLTIVCLTIGSRGDVQPYIALCKELLKEGHKPRIATHAEFEPWVRKHGIDFAPVDGNPAELMRICVEHGMFTYNFMKEANSKFRGWLDDVCSSSWRACQGADVLIESPSTMAGIHIAEALEIPYFRAFTMPWTRTRAYPHAFSVLEKKMGGGYNSITYITFDTIFWTAISGQINKWRRRELGLQNTSQSKMQASLRPFLYNFSPHVVPPPLDWPDWVRVTGYWFLDEADTYEPPADLVAFMDKARKDGKKLVYVGFGSIVIDDPAALTKTVVDSVLKADVRCVLSKGWSDRLETKDASKPEIPLPSEIFQIQSAPHDWLFKQMDAAVHHGGSGTTGASLRAGIPTIIKPFFGDQYFFAQRVEDMGVGVWLKKVNTSVFSRALWEVTNSQRMIVKARVLGQKIRKDNGTQVAIQTIYRELDRARSLVKKHAKLDGELSEEFEEDWTMVEDGEEIDVPHPFEVQQPVAGISQDASKMGGGSLVLGSMVLKGAQKRSPESAYRG.

Residues M1–S12 are compositionally biased toward basic and acidic residues. The disordered stretch occupies residues M1–E229. Residues R13 to G22 are compositionally biased toward basic residues. Residues K23–T48 show a composition bias toward basic and acidic residues. 2 stretches are compositionally biased toward polar residues: residues H54–F63 and R109–T123. Residues K236–K283 form the GRAM 1 domain. The PH domain occupies D287 to F384. Disordered stretches follow at residues L500–A612 and N631–S691. Over residues R510–D523 the composition is skewed to low complexity. 3 stretches are compositionally biased toward basic and acidic residues: residues A524–D536, W544–R557, and R571–D584. Composition is skewed to polar residues over residues S585–A612 and N631–S650. Residues D774–K840 enclose the GRAM 2 domain. UDP-alpha-D-glucose-binding residues include S966, R967, D969, A1269, H1271, H1284, S1287, G1288, T1289, D1308, and Q1309.

Belongs to the glycosyltransferase 28 family.

It is found in the cytoplasm. Its subcellular location is the preautophagosomal structure membrane. It carries out the reaction a sterol + UDP-alpha-D-glucose = a sterol 3-beta-D-glucoside + UDP + H(+). The catalysed reaction is ergosterol + UDP-alpha-D-glucose = ergosteryl 3-beta-D-glucoside + UDP + H(+). Sterol glycosyltransferase responsible for the glycosylation of ergosterol to form ergosterol-glucoside. The protein is Sterol 3-beta-glucosyltransferase of Leptosphaeria maculans (Blackleg fungus).